We begin with the raw amino-acid sequence, 300 residues long: NAD kinase (300 aa).

Residue Asp75 is the Proton acceptor of the active site. Residues 75 to 76 (DG), 149 to 150 (ND), Arg177, Asp179, 190 to 195 (TAYALS), Ala214, and Gln248 contribute to the NAD(+) site.

The protein belongs to the NAD kinase family. The cofactor is a divalent metal cation.

The protein localises to the cytoplasm. The enzyme catalyses NAD(+) + ATP = ADP + NADP(+) + H(+). Functionally, involved in the regulation of the intracellular balance of NAD and NADP, and is a key enzyme in the biosynthesis of NADP. Catalyzes specifically the phosphorylation on 2'-hydroxyl of the adenosine moiety of NAD to yield NADP. In Burkholderia orbicola (strain MC0-3), this protein is NAD kinase.